A 400-amino-acid polypeptide reads, in one-letter code: Enoyl-[acyl-carrier-protein] reductase [NADH] 2 (400 aa).

Residues 48-53, 75-76, 112-113, and 141-142 contribute to the NAD(+) site; these read GASSGF, FE, DA, and LA. Tyrosine 228 serves as a coordination point for substrate. Tyrosine 238 acts as the Proton donor in catalysis. NAD(+) is bound by residues lysine 247 and 276 to 278; that span reads LVT.

This sequence belongs to the TER reductase family. Monomer.

It catalyses the reaction a 2,3-saturated acyl-[ACP] + NAD(+) = a (2E)-enoyl-[ACP] + NADH + H(+). Its pathway is lipid metabolism; fatty acid biosynthesis. In terms of biological role, involved in the final reduction of the elongation cycle of fatty acid synthesis (FAS II). Catalyzes the reduction of a carbon-carbon double bond in an enoyl moiety that is covalently linked to an acyl carrier protein (ACP). This chain is Enoyl-[acyl-carrier-protein] reductase [NADH] 2, found in Vibrio vulnificus (strain YJ016).